The sequence spans 125 residues: Cu-Zn superoxide dismutase-like protein OPG175 (125 aa).

Residues Cys-52 and Cys-102 are joined by a disulfide bond.

The protein belongs to the Cu-Zn superoxide dismutase family.

The protein localises to the virion. Its subcellular location is the host cytoplasm. In terms of biological role, superoxide dismutase-like protein with no enzymatic activity. This Homo sapiens (Human) protein is Cu-Zn superoxide dismutase-like protein OPG175 (OPG175).